The primary structure comprises 149 residues: Sec-independent protein translocase protein TatB (149 aa).

The chain crosses the membrane as a helical span at residues 1–22 (MFDGIGFMELLLIGVLGLIVLG). Polar residues predominate over residues 86–113 (LKQAAQSVNRPYQVQDTPSAQDNQIHNP). Residues 86–149 (LKQAAQSVNR…DPRSNTKANG (64 aa)) form a disordered region. The span at 114–135 (ASQTVSTEASSTSASSAPKSES) shows a compositional bias: low complexity.

The protein belongs to the TatB family. The Tat system comprises two distinct complexes: a TatABC complex, containing multiple copies of TatA, TatB and TatC subunits, and a separate TatA complex, containing only TatA subunits. Substrates initially bind to the TatABC complex, which probably triggers association of the separate TatA complex to form the active translocon.

The protein localises to the cell inner membrane. In terms of biological role, part of the twin-arginine translocation (Tat) system that transports large folded proteins containing a characteristic twin-arginine motif in their signal peptide across membranes. Together with TatC, TatB is part of a receptor directly interacting with Tat signal peptides. TatB may form an oligomeric binding site that transiently accommodates folded Tat precursor proteins before their translocation. This chain is Sec-independent protein translocase protein TatB, found in Shewanella oneidensis (strain ATCC 700550 / JCM 31522 / CIP 106686 / LMG 19005 / NCIMB 14063 / MR-1).